The chain runs to 330 residues: Low-redox potential peroxidase (330 aa).

Positions 1–24 are cleaved as a signal peptide; it reads MRSSTHIFVSFVVYCGVFVTSAIA. Asparagine 27 is a glycosylation site (N-linked (GlcNAc...) asparagine). 3 disulfide bridges follow: cysteine 34–cysteine 285, cysteine 54–cysteine 123, and cysteine 251–cysteine 314. 3 residues coordinate Ca(2+): glycine 69, aspartate 71, and serine 73. Heme b is bound at residue histidine 178. Residues serine 179, aspartate 196, threonine 198, and aspartate 203 each contribute to the Ca(2+) site.

It belongs to the peroxidase family. Ligninase subfamily. The cofactor is Ca(2+). Heme b is required as a cofactor.

Its subcellular location is the secreted. The catalysed reaction is 2 a phenolic donor + H2O2 = 2 a phenolic radical donor + 2 H2O. Functionally, can oxidize the lignin redox mediator veratryl alcohol to veratryl aldehyde. May be involved in oxidation of lignocellulose substrates. The sequence is that of Low-redox potential peroxidase (LnP) from Taiwanofungus camphoratus (Poroid brown-rot fungus).